The chain runs to 68 residues: MRTEQLTAKAMEKVNFDKYLLANAVGKRAEKIANGAEVLLDYDTSGMKYTDIALREIAEGKITVSLEG.

This sequence belongs to the RNA polymerase subunit omega family. In terms of assembly, the RNAP catalytic core consists of 2 alpha, 1 beta, 1 beta' and 1 omega subunit. When a sigma factor is associated with the core the holoenzyme is formed, which can initiate transcription.

The catalysed reaction is RNA(n) + a ribonucleoside 5'-triphosphate = RNA(n+1) + diphosphate. Functionally, promotes RNA polymerase assembly. Latches the N- and C-terminal regions of the beta' subunit thereby facilitating its interaction with the beta and alpha subunits. This chain is DNA-directed RNA polymerase subunit omega, found in Sulfurovum sp. (strain NBC37-1).